The primary structure comprises 659 residues: A-type ATP synthase subunit I (659 aa).

The next 8 membrane-spanning stretches (helical) occupy residues 376–396, 415–435, 460–480, 489–509, 513–533, 542–562, 566–586, and 590–610; these read FFFG…VISA, IMLW…SYCG, VMAL…GFIV, AAIL…LFAL, LGIP…LFVV, MAVL…LSYA, ALAL…NMVW, and IGPI…GHIF.

It belongs to the V-ATPase 116 kDa subunit family. In terms of assembly, has multiple subunits with at least A(3), B(3), C, D, E, F, H, I and proteolipid K(x).

Its subcellular location is the cell membrane. In terms of biological role, component of the A-type ATP synthase that produces ATP from ADP in the presence of a proton gradient across the membrane. The polypeptide is A-type ATP synthase subunit I (Pyrococcus abyssi (strain GE5 / Orsay)).